The primary structure comprises 715 residues: Protein DOA1 (715 aa).

WD repeat units lie at residues 11–40 (GHDQ…RLWS), 53–82 (GQGF…NGVP), 97–125 (GHQG…KVWK), 135–166 (AHNA…KLWQ), 177–206 (IHND…KLVD), 218–247 (GHES…RIWS), and 259–288 (LPAI…RIFS). Ser332 bears the Phosphoserine mark. A PFU domain is found at 352–449 (AHQFSNSSWK…NGISLDQPND (98 aa)). The tract at residues 434–440 (FILKNTN) is interaction with HSE1. One can recognise a PUL domain in the interval 465 to 715 (KVLPVKQYLI…RFKDIFDDLS (251 aa)). 6 ARM repeats span residues 478–512 (YNPD…LHDI), 513–543 (DESW…VRLI), 544–582 (VKKL…CFNN), 583–635 (ENWG…LVTK), 636–680 (GNSD…LATV), and 681–715 (EPTL…DDLS).

The protein belongs to the WD repeat PLAP family. Forms a complex composed of CDC48, NPL4, UFD1, DOA1, SHP1 and deubiquitinase OTU1; within the complex interacts with CDC48. Interacts (via PUL domain) with CDC48 (via C-terminus); the interaction is direct. Forms a complex composed of CDC48, DOA1, deubiquitinase UBP3 and probably BRE5; within the complex interacts with CDC48 and UBP3. May form a complex composed of VPS27, HSE1 and DOA1. Interacts with HSE1 (via SH3 domain). Interacts (via WD repeats and PFU domain) with ubiquitin; the interaction is direct. Interacts with ubiquitinated FZO1 but not unmodified FZO1; the interaction recruits FZO1 to CDC48 and promotes FZO1 proteasomal degradation.

It is found in the nucleus. The protein resides in the cytoplasm. The protein localises to the mitochondrion outer membrane. Its subcellular location is the endosome membrane. Ubiquitin-binding protein involved in protein ubiquitination, sorting and degradation. Acts as a ubiquitinated substrate-recruiting adapter for chaperone ATPase CDC48 by binding mono- or polyubiquitin chains. Depending on the context, promotes or prevents proteasomal degradation of ubiquitinated proteins. Involved in the ubiquitin fusion degradation (UFD) pathway by promoting the degradation of ubiquitinated proteins. Involved in the mitochondria-associated degradation pathway (MAD) by promoting the degradation of several ubiquitinated membrane proteins. By competing with UFD2 to bind CDC48, prevents the multi-ubiquitination and subsequent degradation of UFD2-dependent substrates. Required for ribophagy, a process which relocalizes ribosomal particles into the vacuole for degradation in response to starvation. Involved in the ubiquitin-mediated sorting of membrane proteins into multivesicular bodies (MVBs). In addition, plays an essential role in maintaining cellular ubiquitin levels. May affect indirectly the degradation of ubiquitinylated proteins by regulating cellular ubiquitin levels. This chain is Protein DOA1, found in Saccharomyces cerevisiae (strain ATCC 204508 / S288c) (Baker's yeast).